We begin with the raw amino-acid sequence, 121 residues long: Large ribosomal subunit protein uL14 (121 aa).

The protein belongs to the universal ribosomal protein uL14 family. Part of the 50S ribosomal subunit. Forms a cluster with proteins L3 and L19. In the 70S ribosome, L14 and L19 interact and together make contacts with the 16S rRNA in bridges B5 and B8.

Functionally, binds to 23S rRNA. Forms part of two intersubunit bridges in the 70S ribosome. This chain is Large ribosomal subunit protein uL14, found in Prochlorococcus marinus (strain MIT 9303).